We begin with the raw amino-acid sequence, 100 residues long: Large ribosomal subunit protein bL21 (100 aa).

It belongs to the bacterial ribosomal protein bL21 family. As to quaternary structure, part of the 50S ribosomal subunit. Contacts protein L20.

In terms of biological role, this protein binds to 23S rRNA in the presence of protein L20. The chain is Large ribosomal subunit protein bL21 from Mycoplasma capricolum subsp. capricolum (strain California kid / ATCC 27343 / NCTC 10154).